We begin with the raw amino-acid sequence, 457 residues long: tRNA-2-methylthio-N(6)-dimethylallyladenosine synthase (457 aa).

An MTTase N-terminal domain is found at 3 to 120 (KKVYVKTFGC…LPQMIDARRA (118 aa)). 6 residues coordinate [4Fe-4S] cluster: C12, C49, C83, C157, C161, and C164. Residues 143–377 (RVEGPSAFVS…QATIEENVAR (235 aa)) enclose the Radical SAM core domain. Residues 380 to 447 (QSMVGKVERI…PHSLRGELVL (68 aa)) enclose the TRAM domain.

It belongs to the methylthiotransferase family. MiaB subfamily. In terms of assembly, monomer. [4Fe-4S] cluster serves as cofactor.

It is found in the cytoplasm. The enzyme catalyses N(6)-dimethylallyladenosine(37) in tRNA + (sulfur carrier)-SH + AH2 + 2 S-adenosyl-L-methionine = 2-methylsulfanyl-N(6)-dimethylallyladenosine(37) in tRNA + (sulfur carrier)-H + 5'-deoxyadenosine + L-methionine + A + S-adenosyl-L-homocysteine + 2 H(+). In terms of biological role, catalyzes the methylthiolation of N6-(dimethylallyl)adenosine (i(6)A), leading to the formation of 2-methylthio-N6-(dimethylallyl)adenosine (ms(2)i(6)A) at position 37 in tRNAs that read codons beginning with uridine. In Burkholderia cenocepacia (strain HI2424), this protein is tRNA-2-methylthio-N(6)-dimethylallyladenosine synthase.